We begin with the raw amino-acid sequence, 454 residues long: Ribosomal protein uS12 methylthiotransferase RimO (454 aa).

The 112-residue stretch at 14–125 folds into the MTTase N-terminal domain; sequence SKIAFSHVGC…IAKVLDRVEK (112 aa). Positions 23, 59, 88, 163, 167, and 170 each coordinate [4Fe-4S] cluster. A Radical SAM core domain is found at 149–378; sequence DKNKFVAYLR…ISVQQNISRE (230 aa). One can recognise a TRAM domain in the interval 381–452; that stretch reads QIYVGSKMKI…EYDLYGETIK (72 aa).

This sequence belongs to the methylthiotransferase family. RimO subfamily. It depends on [4Fe-4S] cluster as a cofactor.

It is found in the cytoplasm. It carries out the reaction L-aspartate(89)-[ribosomal protein uS12]-hydrogen + (sulfur carrier)-SH + AH2 + 2 S-adenosyl-L-methionine = 3-methylsulfanyl-L-aspartate(89)-[ribosomal protein uS12]-hydrogen + (sulfur carrier)-H + 5'-deoxyadenosine + L-methionine + A + S-adenosyl-L-homocysteine + 2 H(+). Its function is as follows. Catalyzes the methylthiolation of an aspartic acid residue of ribosomal protein uS12. The protein is Ribosomal protein uS12 methylthiotransferase RimO of Prochlorococcus marinus (strain MIT 9301).